The following is a 563-amino-acid chain: Protein disulfide isomerase-like 1-4 (563 aa).

The N-terminal stretch at M1–A22 is a signal peptide. The interval N40–Q64 is disordered. The Thioredoxin 1 domain maps to L46–A180. Residue N82 is glycosylated (N-linked (GlcNAc...) asparagine). Catalysis depends on nucleophile residues C102 and C105. Cysteines 102 and 105 form a disulfide. N185 and N315 each carry an N-linked (GlcNAc...) asparagine glycan. Positions F394–S523 constitute a Thioredoxin 2 domain. Active-site nucleophile residues include C444 and C447. A disulfide bridge links C444 with C447. Basic and acidic residues predominate over residues K529 to Q542. The tract at residues K529 to L563 is disordered. Residues S543–L563 are compositionally biased toward polar residues. The Prevents secretion from ER motif lies at K560 to L563.

The protein belongs to the protein disulfide isomerase family.

The protein localises to the endoplasmic reticulum lumen. It catalyses the reaction Catalyzes the rearrangement of -S-S- bonds in proteins.. Its function is as follows. Acts as a protein-folding catalyst that interacts with nascent polypeptides to catalyze the formation, isomerization, and reduction or oxidation of disulfide bonds. May play a role in storage protein biogenesis. The polypeptide is Protein disulfide isomerase-like 1-4 (PDIL1-4) (Oryza sativa subsp. japonica (Rice)).